The sequence spans 188 residues: Threonylcarbamoyl-AMP synthase (188 aa).

A YrdC-like domain is found at 4–188 (VENLQQAVDA…ARSLQVLRQG (185 aa)).

This sequence belongs to the SUA5 family. TsaC subfamily.

The protein resides in the cytoplasm. It catalyses the reaction L-threonine + hydrogencarbonate + ATP = L-threonylcarbamoyladenylate + diphosphate + H2O. Its function is as follows. Required for the formation of a threonylcarbamoyl group on adenosine at position 37 (t(6)A37) in tRNAs that read codons beginning with adenine. Catalyzes the conversion of L-threonine, HCO(3)(-)/CO(2) and ATP to give threonylcarbamoyl-AMP (TC-AMP) as the acyladenylate intermediate, with the release of diphosphate. This is Threonylcarbamoyl-AMP synthase from Vibrio cholerae serotype O1 (strain ATCC 39541 / Classical Ogawa 395 / O395).